A 343-amino-acid polypeptide reads, in one-letter code: uncharacterized protein (343 aa).

33–40 is an ATP binding site; it reads GPKSSGKS.

This sequence belongs to the archaeal ATPase family.

This is an uncharacterized protein from Methanocaldococcus jannaschii (strain ATCC 43067 / DSM 2661 / JAL-1 / JCM 10045 / NBRC 100440) (Methanococcus jannaschii).